Here is a 1179-residue protein sequence, read N- to C-terminus: ATP-dependent helicase/deoxyribonuclease subunit B (1179 aa).

Belongs to the helicase family. AddB/RexB type 2 subfamily. Heterodimer of AddA and RexB. Requires Mg(2+) as cofactor.

Its function is as follows. The heterodimer acts as both an ATP-dependent DNA helicase and an ATP-dependent, dual-direction single-stranded exonuclease. Recognizes the chi site generating a DNA molecule suitable for the initiation of homologous recombination. This subunit has 5' -&gt; 3' nuclease activity but not helicase activity. This chain is ATP-dependent helicase/deoxyribonuclease subunit B, found in Lactobacillus delbrueckii subsp. bulgaricus (strain ATCC BAA-365 / Lb-18).